A 241-amino-acid polypeptide reads, in one-letter code: Homeobox protein TGIF2LX (241 aa).

2 disordered regions span residues 1 to 58 (MEAA…GNLP) and 125 to 207 (KTGK…ELVS). The span at 10–39 (ETQSPVQKDSPAKTQSPAQDTSIMSRNNAD) shows a compositional bias: polar residues. A DNA-binding region (homeobox; TALE-type) is located at residues 48-111 (EHKKKRKGNL…INARRRILPD (64 aa)).

Belongs to the TALE/TGIF homeobox family.

The protein localises to the nucleus. May have a transcription role in testis. The sequence is that of Homeobox protein TGIF2LX (TGIF2LX) from Pan troglodytes (Chimpanzee).